The following is a 122-amino-acid chain: UPF0102 protein CE1920 (122 aa).

It belongs to the UPF0102 family.

The sequence is that of UPF0102 protein CE1920 from Corynebacterium efficiens (strain DSM 44549 / YS-314 / AJ 12310 / JCM 11189 / NBRC 100395).